The following is a 358-amino-acid chain: Alanine racemase (358 aa).

Lys-34 (proton acceptor; specific for D-alanine) is an active-site residue. Lys-34 carries the N6-(pyridoxal phosphate)lysine modification. Residue Arg-129 participates in substrate binding. The active-site Proton acceptor; specific for L-alanine is the Tyr-254. Residue Met-302 participates in substrate binding.

This sequence belongs to the alanine racemase family. It depends on pyridoxal 5'-phosphate as a cofactor.

It carries out the reaction L-alanine = D-alanine. The protein operates within amino-acid biosynthesis; D-alanine biosynthesis; D-alanine from L-alanine: step 1/1. Functionally, catalyzes the interconversion of L-alanine and D-alanine. May also act on other amino acids. This is Alanine racemase (alr) from Hamiltonella defensa subsp. Acyrthosiphon pisum (strain 5AT).